The following is a 467-amino-acid chain: UDP-N-acetylmuramate--L-alanine ligase (467 aa).

114–120 (GTHGKTT) lines the ATP pocket.

The protein belongs to the MurCDEF family.

The protein localises to the cytoplasm. The enzyme catalyses UDP-N-acetyl-alpha-D-muramate + L-alanine + ATP = UDP-N-acetyl-alpha-D-muramoyl-L-alanine + ADP + phosphate + H(+). Its pathway is cell wall biogenesis; peptidoglycan biosynthesis. In terms of biological role, cell wall formation. This Chlorobium chlorochromatii (strain CaD3) protein is UDP-N-acetylmuramate--L-alanine ligase.